The following is a 320-amino-acid chain: Transcription factor bHLH96 (320 aa).

The tract at residues glutamate 30–glutamate 121 is disordered. Acidic residues predominate over residues tyrosine 65–leucine 76. Basic residues predominate over residues glycine 104 to serine 114. Positions asparagine 122 to leucine 173 constitute a bHLH domain. The tract at residues valine 184–serine 206 is disordered. Residues serine 244–serine 320 enclose the ACT domain.

As to quaternary structure, homodimer. As to expression, expressed constitutively in roots, leaves, stems, and flowers.

It localises to the nucleus. The sequence is that of Transcription factor bHLH96 (BHLH96) from Arabidopsis thaliana (Mouse-ear cress).